A 336-amino-acid chain; its full sequence is Adenylosuccinate synthetase (336 aa).

GTP is bound by residues 12-18 (GDEGKGK) and 42-44 (GHS). Asp13 (proton acceptor) is an active-site residue. Asp13 and Gly42 together coordinate Mg(2+). Residues 13 to 16 (DEGK), 40 to 43 (NAGH), Thr127, Arg141, Gln179, Thr194, and Arg256 contribute to the IMP site. The Proton donor role is filled by His43. 252 to 258 (TVTGRRR) is a substrate binding site. Residues Arg258, 284-286 (CLD), and 324-326 (STG) contribute to the GTP site.

It belongs to the adenylosuccinate synthetase family. In terms of assembly, homodimer. Mg(2+) is required as a cofactor.

The protein localises to the cytoplasm. The catalysed reaction is IMP + L-aspartate + GTP = N(6)-(1,2-dicarboxyethyl)-AMP + GDP + phosphate + 2 H(+). It functions in the pathway purine metabolism; AMP biosynthesis via de novo pathway; AMP from IMP: step 1/2. Plays an important role in the de novo pathway of purine nucleotide biosynthesis. Catalyzes the first committed step in the biosynthesis of AMP from IMP. The chain is Adenylosuccinate synthetase from Methanococcus aeolicus (strain ATCC BAA-1280 / DSM 17508 / OCM 812 / Nankai-3).